A 164-amino-acid chain; its full sequence is MSKDHLDFPHVYKKNKVLKLKPLDLSKNPRSYYFSSQNGSIQAIINHCNNINQITARNWLKLSKVLSYFGLEKDTSDSISKNKSPFNRFLKDISHIFREGEGSTKKASELGEILEKIKNLDLKIENLNKRIPDNLVTKALIKELVKDFDERLTEVRDDIKKVIG.

The protein belongs to the caulimoviridae ORF II family.

Its function is as follows. This protein is involved in virus transmission. The protein is Aphid transmission protein of Scrophularia californica (California bee plant).